The primary structure comprises 201 residues: FMN-dependent NADH:quinone oxidoreductase (201 aa).

Residues S9 and 16 to 18 (SYS) each bind FMN.

This sequence belongs to the azoreductase type 1 family. As to quaternary structure, homodimer. Requires FMN as cofactor.

It carries out the reaction 2 a quinone + NADH + H(+) = 2 a 1,4-benzosemiquinone + NAD(+). The catalysed reaction is N,N-dimethyl-1,4-phenylenediamine + anthranilate + 2 NAD(+) = 2-(4-dimethylaminophenyl)diazenylbenzoate + 2 NADH + 2 H(+). Quinone reductase that provides resistance to thiol-specific stress caused by electrophilic quinones. Functionally, also exhibits azoreductase activity. Catalyzes the reductive cleavage of the azo bond in aromatic azo compounds to the corresponding amines. The sequence is that of FMN-dependent NADH:quinone oxidoreductase from Mesomycoplasma hyopneumoniae (strain 7448) (Mycoplasma hyopneumoniae).